A 238-amino-acid polypeptide reads, in one-letter code: Fish-egg lectin (238 aa).

5 tandem repeats follow at residues 1–34 (LDCT…VLID), 35–68 (NVFT…KYQS), 69–106 (GGFV…MDAN), 107–156 (NKWP…CSGS), and 157–199 (GSFI…KPDG). A 5 X approximate tandem repeats region spans residues 1 to 199 (LDCTVIDGNL…TGVTRSKPDG (199 aa)). Intrachain disulfides connect Cys3–Cys234, Cys100–Cys153, Cys128–Cys133, and Cys208–Cys226. N-linked (GlcNAc...) asparagine glycosylation is present at Asn27.

The protein belongs to the tectonin family. In terms of tissue distribution, expressed in the eggs.

The protein localises to the secreted. Its function is as follows. Lipopolysaccharide-binding protein with a very low agglutinating activity for human A-type erythrocytes and interacts with both Gram-positive and Gram-negative bacteria. The sequence is that of Fish-egg lectin from Cyprinus carpio (Common carp).